The chain runs to 354 residues: Cyclin-D1-2 (354 aa).

Disordered stretches follow at residues 37-74 (FFQQLQGPAPAVSSSPSTTTATAPAAAGSCDDGGEEEE) and 331-354 (TTATTAVSSEEVVSSSPPSKRRKM). 2 stretches are compositionally biased toward low complexity: residues 44–66 (PAPAVSSSPSTTTATAPAAAGSC) and 331–346 (TTATTAVSSEEVVSSS).

This sequence belongs to the cyclin family. Cyclin D subfamily.

The sequence is that of Cyclin-D1-2 (CYCD1-2) from Oryza sativa subsp. japonica (Rice).